We begin with the raw amino-acid sequence, 195 residues long: PAP fimbrial minor pilin protein (195 aa).

The N-terminal stretch at 1-22 is a signal peptide; that stretch reads MRLRFSVPLFFFGCVFVHGVFA. Cysteine 58 and cysteine 97 are disulfide-bonded.

Belongs to the fimbrial protein family.

The protein resides in the secreted. Its subcellular location is the fimbrium. Fimbriae (also called pili), polar filaments radiating from the surface of the bacterium to a length of 0.5-1.5 micrometers and numbering 100-300 per cell, enable bacteria to colonize the epithelium of specific host organs. Its function is as follows. PapH seems to anchor the pilus to the bacterial cell. In addition the stoichiometric relationship between PapH and PapA determines the pilus length. In Escherichia coli, this protein is PAP fimbrial minor pilin protein (papH).